Here is a 107-residue protein sequence, read N- to C-terminus: Auxin-responsive protein SAUR50 (107 aa).

This sequence belongs to the ARG7 family. As to quaternary structure, interacts with BZR1. In terms of tissue distribution, expressed in cotyledons, leaves, flowers and siliques.

Its subcellular location is the cell membrane. Its function is as follows. Provide a mechanistic link between auxin and plasma membrane H(+)-ATPases (PM H(+)-ATPases, e.g. AHA1 and AHA2), and triggers PM H(+)-ATPases activity by promoting phosphorylation of their C-terminal autoinhibitory domain as a result of PP2C-D subfamily of type 2C phosphatases inhibition, thus leading to the acidification of the apoplast and the facilitation of solutes and water uptake to drive cell expansion. Triggers plant growth probably by promoting cell elongation. Regulates branch angles and bending. Effector of hormonal and environmental signals in plant growth. In Arabidopsis thaliana (Mouse-ear cress), this protein is Auxin-responsive protein SAUR50.